Here is a 183-residue protein sequence, read N- to C-terminus: Ribosome maturation factor RimM (183 aa).

Residues 105 to 181 form the PRC barrel domain; the sequence is ANEYHLMDLI…RIEIDPPLGL (77 aa).

Belongs to the RimM family. In terms of assembly, binds ribosomal protein uS19.

The protein localises to the cytoplasm. Its function is as follows. An accessory protein needed during the final step in the assembly of 30S ribosomal subunit, possibly for assembly of the head region. Essential for efficient processing of 16S rRNA. May be needed both before and after RbfA during the maturation of 16S rRNA. It has affinity for free ribosomal 30S subunits but not for 70S ribosomes. This chain is Ribosome maturation factor RimM, found in Thermosynechococcus vestitus (strain NIES-2133 / IAM M-273 / BP-1).